The following is an 817-amino-acid chain: Phosphoenolpyruvate synthase (817 aa).

Catalysis depends on His-442, which acts as the Tele-phosphohistidine intermediate. The substrate site is built by Arg-540, Arg-587, Glu-684, Gly-706, Thr-707, Asn-708, and Asp-709. Glu-684 lines the Mg(2+) pocket. A Mg(2+)-binding site is contributed by Asp-709. Cys-756 acts as the Proton donor in catalysis.

Belongs to the PEP-utilizing enzyme family. Homooctamer. It depends on Mg(2+) as a cofactor.

It catalyses the reaction pyruvate + ATP + H2O = phosphoenolpyruvate + AMP + phosphate + 2 H(+). The protein operates within carbohydrate biosynthesis; gluconeogenesis. Functionally, catalyzes the phosphorylation of pyruvate to phosphoenolpyruvate. The polypeptide is Phosphoenolpyruvate synthase (ppsA) (Pyrococcus furiosus (strain ATCC 43587 / DSM 3638 / JCM 8422 / Vc1)).